The following is a 302-amino-acid chain: GTPase Era (302 aa).

The Era-type G domain occupies 8–175; the sequence is HSGFVAIIGR…LTTLKGQLPE (168 aa). The interval 16 to 23 is G1; the sequence is GRPNVGKS. Residue 16-23 coordinates GTP; that stretch reads GRPNVGKS. Residues 42-46 form a G2 region; sequence QTTRN. A G3 region spans residues 63–66; the sequence is DTPG. Residues 63–67 and 125–128 contribute to the GTP site; these read DTPGI and NKID. A G4 region spans residues 125 to 128; sequence NKID. A G5 region spans residues 154-156; sequence ISA. In terms of domain architecture, KH type-2 spans 206–283; it reads TRQEVPHSTA…YLELWVKVQE (78 aa).

This sequence belongs to the TRAFAC class TrmE-Era-EngA-EngB-Septin-like GTPase superfamily. Era GTPase family. In terms of assembly, monomer.

It localises to the cytoplasm. It is found in the cell membrane. An essential GTPase that binds both GDP and GTP, with rapid nucleotide exchange. Plays a role in 16S rRNA processing and 30S ribosomal subunit biogenesis and possibly also in cell cycle regulation and energy metabolism. The chain is GTPase Era from Lactiplantibacillus plantarum (strain ATCC BAA-793 / NCIMB 8826 / WCFS1) (Lactobacillus plantarum).